The sequence spans 205 residues: MKQQSGLTMQQVVLATGNPGKVRELADLLAAFGLDIVAQTALGVESAEETGLTFIENAILKARHASAVTGLPAIADDSGLAVDVLGGAPGIYSARYAGEEATDRQNLDKLLAALNAVPDGERQAHFHCVLVYLRHAADPTPLVFHGSWTGEIAHSAAGVGGFGYDPIFFVPELGKTAAEMSKSEKLAVSHRGKALNLLLDAMKHG.

A substrate-binding site is contributed by 16–21; that stretch reads TGNPGK. Mg(2+)-binding residues include glutamate 48 and aspartate 77. Aspartate 77 serves as the catalytic Proton acceptor. Substrate is bound by residues serine 78, 162-165, lysine 185, and 190-191; these read FGYD and HR.

The protein belongs to the HAM1 NTPase family. As to quaternary structure, homodimer. Mg(2+) is required as a cofactor.

It carries out the reaction XTP + H2O = XMP + diphosphate + H(+). It catalyses the reaction dITP + H2O = dIMP + diphosphate + H(+). The catalysed reaction is ITP + H2O = IMP + diphosphate + H(+). Functionally, pyrophosphatase that catalyzes the hydrolysis of nucleoside triphosphates to their monophosphate derivatives, with a high preference for the non-canonical purine nucleotides XTP (xanthosine triphosphate), dITP (deoxyinosine triphosphate) and ITP. Seems to function as a house-cleaning enzyme that removes non-canonical purine nucleotides from the nucleotide pool, thus preventing their incorporation into DNA/RNA and avoiding chromosomal lesions. This is dITP/XTP pyrophosphatase from Erwinia tasmaniensis (strain DSM 17950 / CFBP 7177 / CIP 109463 / NCPPB 4357 / Et1/99).